Here is a 470-residue protein sequence, read N- to C-terminus: Argininosuccinate lyase (470 aa).

This sequence belongs to the lyase 1 family. Argininosuccinate lyase subfamily.

It is found in the cytoplasm. It carries out the reaction 2-(N(omega)-L-arginino)succinate = fumarate + L-arginine. It participates in amino-acid biosynthesis; L-arginine biosynthesis; L-arginine from L-ornithine and carbamoyl phosphate: step 3/3. The polypeptide is Argininosuccinate lyase (Mycobacterium tuberculosis (strain ATCC 25618 / H37Rv)).